The chain runs to 163 residues: uncharacterized protein (163 aa).

This is an uncharacterized protein from Caenorhabditis elegans.